The chain runs to 96 residues: Co-chaperonin GroES (96 aa).

It belongs to the GroES chaperonin family. As to quaternary structure, heptamer of 7 subunits arranged in a ring. Interacts with the chaperonin GroEL.

The protein resides in the cytoplasm. Functionally, together with the chaperonin GroEL, plays an essential role in assisting protein folding. The GroEL-GroES system forms a nano-cage that allows encapsulation of the non-native substrate proteins and provides a physical environment optimized to promote and accelerate protein folding. GroES binds to the apical surface of the GroEL ring, thereby capping the opening of the GroEL channel. This Ralstonia nicotianae (strain ATCC BAA-1114 / GMI1000) (Ralstonia solanacearum) protein is Co-chaperonin GroES.